The following is a 410-amino-acid chain: Retrovirus-related Pol polyprotein from type-1 retrotransposable element R1 2 (410 aa).

The 118-residue stretch at Gly-1–Val-118 folds into the Reverse transcriptase domain. The segment at Ser-254–Gly-410 is nucleic acid-binding endonuclease.

The enzyme catalyses DNA(n) + a 2'-deoxyribonucleoside 5'-triphosphate = DNA(n+1) + diphosphate. In Nasonia vitripennis (Parasitic wasp), this protein is Retrovirus-related Pol polyprotein from type-1 retrotransposable element R1 2.